Consider the following 632-residue polypeptide: tRNA uridine 5-carboxymethylaminomethyl modification enzyme MnmG (632 aa).

FAD contacts are provided by residues 13 to 18 (GGGHAG), valine 125, and serine 180. 273–287 (GPRYCPSIEDKVMRF) serves as a coordination point for NAD(+). Glutamine 370 contributes to the FAD binding site.

It belongs to the MnmG family. As to quaternary structure, homodimer. Heterotetramer of two MnmE and two MnmG subunits. Requires FAD as cofactor.

It localises to the cytoplasm. NAD-binding protein involved in the addition of a carboxymethylaminomethyl (cmnm) group at the wobble position (U34) of certain tRNAs, forming tRNA-cmnm(5)s(2)U34. This Vibrio vulnificus (strain YJ016) protein is tRNA uridine 5-carboxymethylaminomethyl modification enzyme MnmG.